A 395-amino-acid polypeptide reads, in one-letter code: Beta-1,4-galactosyltransferase 3 (395 aa).

Residues 1 to 10 (MLRRLLERPC) are Cytoplasmic-facing. The helical; Signal-anchor for type II membrane protein transmembrane segment at 11–31 (TLALLVGSQLAVMMYLSLGGF) threads the bilayer. Topologically, residues 32–395 (RSLSALFGRD…ANHTAPRGSH (364 aa)) are lumenal. Asparagine 57 is a glycosylation site (N-linked (GlcNAc...) asparagine). A disulfide bridge links cysteine 79 with cysteine 121. 132-136 (PHRAR) is a UDP-alpha-D-galactose binding site. Residue asparagine 168 is glycosylated (N-linked (GlcNAc...) asparagine). UDP-alpha-D-galactose-binding positions include 171–173 (FNR), 198–199 (VD), tyrosine 228, and tryptophan 260. Cysteine 192 and cysteine 211 are oxidised to a cystine. Mn(2+) is bound at residue aspartate 199. An N-acetyl-D-glucosamine-binding site is contributed by 262–265 (GEDD). Histidine 293 lines the Mn(2+) pocket. 293 to 295 (HRG) is a binding site for UDP-alpha-D-galactose. Arginine 305 contributes to the N-acetyl-D-glucosamine binding site. A glycan (N-linked (GlcNAc...) asparagine) is linked at asparagine 339. The disordered stretch occupies residues 340–395 (ITADIGTDPRGPRSPSGPRYPPGSSQAFRQEMLQRRPPARPGPLPTANHTAPRGSH). The span at 352–364 (RSPSGPRYPPGSS) shows a compositional bias: low complexity. Asparagine 387 is a glycosylation site (N-linked (GlcNAc...) asparagine).

This sequence belongs to the glycosyltransferase 7 family. Requires Mn(2+) as cofactor.

It localises to the golgi apparatus. It is found in the golgi stack membrane. It carries out the reaction an N-acetyl-beta-D-glucosaminyl derivative + UDP-alpha-D-galactose = a beta-D-galactosyl-(1-&gt;4)-N-acetyl-beta-D-glucosaminyl derivative + UDP + H(+). It catalyses the reaction N-acetyl-D-glucosamine + UDP-alpha-D-galactose = beta-D-galactosyl-(1-&gt;4)-N-acetyl-D-glucosamine + UDP + H(+). The enzyme catalyses a beta-D-GlcNAc-(1-&gt;3)-beta-D-Gal-(1-&gt;4)-beta-D-Glc-(1&lt;-&gt;1)-Cer(d18:1(4E)) + UDP-alpha-D-galactose = a neolactoside nLc4Cer(d18:1(4E)) + UDP + H(+). The catalysed reaction is a beta-D-glucosylceramide + UDP-alpha-D-galactose = a beta-D-galactosyl-(1-&gt;4)-beta-D-glucosyl-(1&lt;-&gt;1)-ceramide + UDP + H(+). It carries out the reaction a neolactoside IV(3)-beta-GlcNAc-nLc4Cer + UDP-alpha-D-galactose = a neolactoside nLc6Cer + UDP + H(+). The protein operates within protein modification; protein glycosylation. In terms of biological role, responsible for the synthesis of complex-type N-linked oligosaccharides in many glycoproteins as well as the carbohydrate moieties of glycolipids. In Mus musculus (Mouse), this protein is Beta-1,4-galactosyltransferase 3.